Reading from the N-terminus, the 404-residue chain is Probable protein phosphatase 2C 30 (404 aa).

Basic and acidic residues predominate over residues 42 to 52; it reads AERGAEEETSG. The tract at residues 42–72 is disordered; the sequence is AERGAEEETSGKRRRLDGGGGEASTDEEDRE. The 323-residue stretch at 77-399 folds into the PPM-type phosphatase domain; that stretch reads RYGFTSVCGR…DNVSVVVVNL (323 aa). Residues aspartate 111, glycine 112, and aspartate 298 each coordinate Mn(2+). The interval 321 to 369 is disordered; the sequence is GRRERNRSSPTSNLSPRQSSSSGDEAPNDGAPSAAAGSESDEESAAEED. The span at 330–343 shows a compositional bias: polar residues; it reads PTSNLSPRQSSSSG. A Mn(2+)-binding site is contributed by aspartate 390.

This sequence belongs to the PP2C family. As to quaternary structure, interacts with PYL5 and SAPK2. Binding to PYL5 is dependent on the presence of abscisic acid (ABA). Interacts with PYL3, PYL5 and PYL9. Binding to PYL5 and PYL9 is dependent on the presence of ABA. Requires Mg(2+) as cofactor. It depends on Mn(2+) as a cofactor.

Its subcellular location is the nucleus. It carries out the reaction O-phospho-L-seryl-[protein] + H2O = L-seryl-[protein] + phosphate. The catalysed reaction is O-phospho-L-threonyl-[protein] + H2O = L-threonyl-[protein] + phosphate. Its function is as follows. Together with ABI5, PYL5 and SAPK2, is part of an abscisic acid (ABA) signaling unit that modulates seed germination and early seedling growth. This is Probable protein phosphatase 2C 30 from Oryza sativa subsp. japonica (Rice).